We begin with the raw amino-acid sequence, 189 residues long: MFGKKQVLASVLLIPLLMTGCGVADQGEGRRDNNDVRNVNYRNPANDDMRNVNNRDNVDNNVNDNVNNNRVNDDNNNDRKLEVADEAADKVTDLKEVKHADIIVAGNQAYVAVVLTNGNKGAVENNLKKKIAKKVRSTDKNIDNVYVSANPDFVERMQGYGKRIQNGDPIAGLFDEFTQTVQRVFPNAE.

The signal sequence occupies residues 1–20 (MFGKKQVLASVLLIPLLMTG). Residue Cys-21 is the site of N-palmitoyl cysteine attachment. Cys-21 is lipidated: S-diacylglycerol cysteine. Residues 24 to 79 (ADQGEGRRDNNDVRNVNYRNPANDDMRNVNNRDNVDNNVNDNVNNNRVNDDNNNDR) are disordered. A compositionally biased stretch (low complexity) spans 51–70 (NVNNRDNVDNNVNDNVNNNR).

It localises to the forespore inner membrane. In terms of biological role, probably contributes, directly or indirectly, to early events in germination. May play a role in spore outgrowth. The polypeptide is Probable spore germination lipoprotein YhcN (yhcN) (Bacillus subtilis (strain 168)).